Here is a 149-residue protein sequence, read N- to C-terminus: CCAAT/enhancer-binding protein gamma (149 aa).

Positions 1–12 (MSKVSQQNSTPG) are enriched in polar residues. The tract at residues 1-92 (MSKVSQQNST…SKQKAQDTLQ (92 aa)) is disordered. Residue Lys-3 forms a Glycyl lysine isopeptide (Lys-Gly) (interchain with G-Cter in SUMO2) linkage. Over residues 28-37 (LQQVPQLVPA) the composition is skewed to low complexity. Residues 56–72 (SPMDRNSDEYRQRRERN) are compositionally biased toward basic and acidic residues. Positions 62–125 (SDEYRQRRER…SVLKDLFLEH (64 aa)) constitute a bZIP domain. The interval 66–93 (RQRRERNNMAVKKSRLKSKQKAQDTLQR) is basic motif. A leucine-zipper region spans residues 97–118 (LKEENERLEAKIKLLTKELSVL). The segment at 128–149 (NLADNVQPSSTENTTNPDKAGQ) is disordered. The segment covering 131–149 (DNVQPSSTENTTNPDKAGQ) has biased composition (polar residues).

This sequence belongs to the bZIP family. C/EBP subfamily. Binds DNA as a dimer and can form stable heterodimers with CEBPA and CEBPB. Interacts with ZNF638; this interaction increases transcriptional activation.

The protein resides in the nucleus. In terms of biological role, transcription factor that binds to the promoter and the enhancer regions of target genes. Binds to the enhancer element PRE-I (positive regulatory element-I) of the IL-4 gene. Binds to the promoter and the enhancer of the immunoglobulin heavy chain. Binds to GPE1, a cis-acting element in the G-CSF gene promoter. The sequence is that of CCAAT/enhancer-binding protein gamma (CEBPG) from Bos taurus (Bovine).